A 333-amino-acid polypeptide reads, in one-letter code: Phosphate acyltransferase (333 aa).

The protein belongs to the PlsX family. As to quaternary structure, homodimer. Probably interacts with PlsY.

It localises to the cytoplasm. The enzyme catalyses a fatty acyl-[ACP] + phosphate = an acyl phosphate + holo-[ACP]. It functions in the pathway lipid metabolism; phospholipid metabolism. Its function is as follows. Catalyzes the reversible formation of acyl-phosphate (acyl-PO(4)) from acyl-[acyl-carrier-protein] (acyl-ACP). This enzyme utilizes acyl-ACP as fatty acyl donor, but not acyl-CoA. This is Phosphate acyltransferase from Ligilactobacillus salivarius (strain UCC118) (Lactobacillus salivarius).